Consider the following 245-residue polypeptide: 1-(5-phosphoribosyl)-5-[(5-phosphoribosylamino)methylideneamino] imidazole-4-carboxamide isomerase (245 aa).

The Proton acceptor role is filled by Asp10. Asp129 (proton donor) is an active-site residue.

It belongs to the HisA/HisF family.

It localises to the cytoplasm. It catalyses the reaction 1-(5-phospho-beta-D-ribosyl)-5-[(5-phospho-beta-D-ribosylamino)methylideneamino]imidazole-4-carboxamide = 5-[(5-phospho-1-deoxy-D-ribulos-1-ylimino)methylamino]-1-(5-phospho-beta-D-ribosyl)imidazole-4-carboxamide. The protein operates within amino-acid biosynthesis; L-histidine biosynthesis; L-histidine from 5-phospho-alpha-D-ribose 1-diphosphate: step 4/9. This Parafrankia sp. (strain EAN1pec) protein is 1-(5-phosphoribosyl)-5-[(5-phosphoribosylamino)methylideneamino] imidazole-4-carboxamide isomerase.